Here is a 156-residue protein sequence, read N- to C-terminus: uncharacterized protein (156 aa).

This is an uncharacterized protein from Invertebrate iridescent virus 3 (IIV-3).